The chain runs to 332 residues: Probable electron transfer flavoprotein subunit alpha, mitochondrial (332 aa).

275-303 (LYIAIGISGAIQHLAGMKDSKVIVAINKD) provides a ligand contact to FAD.

It belongs to the ETF alpha-subunit/FixB family. As to quaternary structure, heterodimer of an alpha and a beta subunit. The cofactor is FAD.

Its subcellular location is the mitochondrion matrix. The electron transfer flavoprotein serves as a specific electron acceptor for several dehydrogenases, including five acyl-CoA dehydrogenases, glutaryl-CoA and sarcosine dehydrogenase. It transfers the electrons to the main mitochondrial respiratory chain via ETF-ubiquinone oxidoreductase (ETF dehydrogenase). In Caenorhabditis elegans, this protein is Probable electron transfer flavoprotein subunit alpha, mitochondrial.